The following is an 80-amino-acid chain: Large ribosomal subunit protein uL24 (80 aa).

Belongs to the universal ribosomal protein uL24 family. Part of the 50S ribosomal subunit.

Functionally, one of two assembly initiator proteins, it binds directly to the 5'-end of the 23S rRNA, where it nucleates assembly of the 50S subunit. In terms of biological role, one of the proteins that surrounds the polypeptide exit tunnel on the outside of the subunit. The chain is Large ribosomal subunit protein uL24 from Chlorobium phaeobacteroides (strain DSM 266 / SMG 266 / 2430).